Consider the following 186-residue polypeptide: Single-stranded DNA-binding protein 1 (186 aa).

Residues 1 to 108 form the SSB domain; the sequence is MDATVTVVGN…LEIDEIGPTL (108 aa). The tract at residues 119–186 is disordered; the sequence is TQAGHGVSPD…EDFDSDEVPF (68 aa). Acidic residues predominate over residues 175–186; that stretch reads SYEDFDSDEVPF.

As to quaternary structure, homotetramer.

This is Single-stranded DNA-binding protein 1 (ssb1) from Tropheryma whipplei (strain Twist) (Whipple's bacillus).